We begin with the raw amino-acid sequence, 328 residues long: Biotin synthase (328 aa).

The Radical SAM core domain occupies 48–275 (NRIQLSKLLN…KSHVRLTAGR (228 aa)). [4Fe-4S] cluster-binding residues include Cys63, Cys67, and Cys70. [2Fe-2S] cluster is bound by residues Cys107, Cys138, Cys198, and Arg270.

This sequence belongs to the radical SAM superfamily. Biotin synthase family. As to quaternary structure, homodimer. [4Fe-4S] cluster serves as cofactor. [2Fe-2S] cluster is required as a cofactor.

The enzyme catalyses (4R,5S)-dethiobiotin + (sulfur carrier)-SH + 2 reduced [2Fe-2S]-[ferredoxin] + 2 S-adenosyl-L-methionine = (sulfur carrier)-H + biotin + 2 5'-deoxyadenosine + 2 L-methionine + 2 oxidized [2Fe-2S]-[ferredoxin]. The protein operates within cofactor biosynthesis; biotin biosynthesis; biotin from 7,8-diaminononanoate: step 2/2. In terms of biological role, catalyzes the conversion of dethiobiotin (DTB) to biotin by the insertion of a sulfur atom into dethiobiotin via a radical-based mechanism. The protein is Biotin synthase of Brucella abortus (strain S19).